Here is a 152-residue protein sequence, read N- to C-terminus: UPF0735 ACT domain-containing protein CTC_00116 (152 aa).

Residues 76 to 151 (IISVTLNHRP…NVIKLDLIAM (76 aa)) form the ACT domain.

This sequence belongs to the UPF0735 family.

This Clostridium tetani (strain Massachusetts / E88) protein is UPF0735 ACT domain-containing protein CTC_00116.